The sequence spans 484 residues: Trigger factor (484 aa).

The 80-residue stretch at 165 to 244 (GDFVQIDLTA…VQSVKERELP (80 aa)) folds into the PPIase FKBP-type domain. Residues 429–484 (DAVSEEPADADAEAVVADAPAEEAAEAPAAEEAPAEKPKKKAPAKKKASEKAADSE) are disordered. Residues 430-440 (AVSEEPADADA) are compositionally biased toward acidic residues. Positions 475–484 (KASEKAADSE) are enriched in basic and acidic residues.

It belongs to the FKBP-type PPIase family. Tig subfamily.

The protein localises to the cytoplasm. It catalyses the reaction [protein]-peptidylproline (omega=180) = [protein]-peptidylproline (omega=0). In terms of biological role, involved in protein export. Acts as a chaperone by maintaining the newly synthesized protein in an open conformation. Functions as a peptidyl-prolyl cis-trans isomerase. This chain is Trigger factor, found in Clavibacter michiganensis subsp. michiganensis (strain NCPPB 382).